Consider the following 256-residue polypeptide: 1-(5-phosphoribosyl)-5-[(5-phosphoribosylamino)methylideneamino] imidazole-4-carboxamide isomerase (256 aa).

Aspartate 8 functions as the Proton acceptor in the catalytic mechanism. The Proton donor role is filled by aspartate 129.

It belongs to the HisA/HisF family.

The protein localises to the cytoplasm. The enzyme catalyses 1-(5-phospho-beta-D-ribosyl)-5-[(5-phospho-beta-D-ribosylamino)methylideneamino]imidazole-4-carboxamide = 5-[(5-phospho-1-deoxy-D-ribulos-1-ylimino)methylamino]-1-(5-phospho-beta-D-ribosyl)imidazole-4-carboxamide. It participates in amino-acid biosynthesis; L-histidine biosynthesis; L-histidine from 5-phospho-alpha-D-ribose 1-diphosphate: step 4/9. This chain is 1-(5-phosphoribosyl)-5-[(5-phosphoribosylamino)methylideneamino] imidazole-4-carboxamide isomerase, found in Synechococcus elongatus (strain ATCC 33912 / PCC 7942 / FACHB-805) (Anacystis nidulans R2).